The chain runs to 365 residues: Chorismate synthase (365 aa).

NADP(+) contacts are provided by Arg-48 and Arg-54. FMN contacts are provided by residues 131-133, 243-244, Gly-288, 303-307, and Arg-329; these read RSS, NA, and KPTSS.

It belongs to the chorismate synthase family. In terms of assembly, homotetramer. Requires FMNH2 as cofactor.

It carries out the reaction 5-O-(1-carboxyvinyl)-3-phosphoshikimate = chorismate + phosphate. It functions in the pathway metabolic intermediate biosynthesis; chorismate biosynthesis; chorismate from D-erythrose 4-phosphate and phosphoenolpyruvate: step 7/7. Its function is as follows. Catalyzes the anti-1,4-elimination of the C-3 phosphate and the C-6 proR hydrogen from 5-enolpyruvylshikimate-3-phosphate (EPSP) to yield chorismate, which is the branch point compound that serves as the starting substrate for the three terminal pathways of aromatic amino acid biosynthesis. This reaction introduces a second double bond into the aromatic ring system. The polypeptide is Chorismate synthase (Sinorhizobium fredii (strain NBRC 101917 / NGR234)).